The chain runs to 252 residues: MPKLEVCCYSAECAIEAEQAGADRIELCCAPKEGGLTPSFGTLRAVRDRVALPVHPIIRPRGGDFCYSAAEFEVMLNDVAQVRDMGFPGLVIGLLDADGHVSLARMRRIMHLAGTMDVTFHRAFDMCLNPYQALRQLTDLGVARILSSGQQQSAEAGLALLRELTELSRGPIIMAGACVRLTNLHKFVQSGIQELHSSAGQFFPSGMRYRKAGVSMSADSEADEFSRYRVDSEMVANMKHALTVLPVATRPA.

It belongs to the CutC family.

The protein resides in the cytoplasm. The polypeptide is PF03932 family protein CutC (Sodalis glossinidius (strain morsitans)).